Here is a 292-residue protein sequence, read N- to C-terminus: Ribosomal RNA small subunit methyltransferase A (292 aa).

Positions 29, 31, 56, 77, 102, and 127 each coordinate S-adenosyl-L-methionine.

This sequence belongs to the class I-like SAM-binding methyltransferase superfamily. rRNA adenine N(6)-methyltransferase family. RsmA subfamily.

Its subcellular location is the cytoplasm. The enzyme catalyses adenosine(1518)/adenosine(1519) in 16S rRNA + 4 S-adenosyl-L-methionine = N(6)-dimethyladenosine(1518)/N(6)-dimethyladenosine(1519) in 16S rRNA + 4 S-adenosyl-L-homocysteine + 4 H(+). In terms of biological role, specifically dimethylates two adjacent adenosines (A1518 and A1519) in the loop of a conserved hairpin near the 3'-end of 16S rRNA in the 30S particle. May play a critical role in biogenesis of 30S subunits. This Bacillus pumilus (strain SAFR-032) protein is Ribosomal RNA small subunit methyltransferase A.